The following is a 155-amino-acid chain: UPF0260 protein Smed_0627 (155 aa).

It belongs to the UPF0260 family.

This is UPF0260 protein Smed_0627 from Sinorhizobium medicae (strain WSM419) (Ensifer medicae).